The following is a 75-amino-acid chain: MVRYFRRRKFCRFTVEKIKEIDYKDLSMLKNYITESGKIVPSRITGTSARYQRQLARAIKRARYLSLLPYTDQHQ.

The protein belongs to the bacterial ribosomal protein bS18 family. As to quaternary structure, part of the 30S ribosomal subunit. Forms a tight heterodimer with protein bS6.

Its function is as follows. Binds as a heterodimer with protein bS6 to the central domain of the 16S rRNA, where it helps stabilize the platform of the 30S subunit. This is Small ribosomal subunit protein bS18 from Buchnera aphidicola subsp. Baizongia pistaciae (strain Bp).